The chain runs to 498 residues: ATP synthase subunit beta, chloroplastic (498 aa).

172-179 (GGAGVGKT) lines the ATP pocket.

It belongs to the ATPase alpha/beta chains family. In terms of assembly, F-type ATPases have 2 components, CF(1) - the catalytic core - and CF(0) - the membrane proton channel. CF(1) has five subunits: alpha(3), beta(3), gamma(1), delta(1), epsilon(1). CF(0) has four main subunits: a(1), b(1), b'(1) and c(9-12).

Its subcellular location is the plastid. It is found in the chloroplast thylakoid membrane. The enzyme catalyses ATP + H2O + 4 H(+)(in) = ADP + phosphate + 5 H(+)(out). Its function is as follows. Produces ATP from ADP in the presence of a proton gradient across the membrane. The catalytic sites are hosted primarily by the beta subunits. This chain is ATP synthase subunit beta, chloroplastic, found in Populus tremuloides (Quaking aspen).